Here is a 145-residue protein sequence, read N- to C-terminus: 6-pyruvoyl tetrahydrobiopterin synthase (145 aa).

Residue Ser-19 is modified to Phosphoserine. His-24 contacts Zn(2+). Ser-28 carries the post-translational modification Phosphoserine. The active-site Proton acceptor is the Cys-43. Zn(2+) contacts are provided by His-49 and His-51. Catalysis depends on His-90, which acts as the Charge relay system. Position 128 is a phosphotyrosine (Tyr-128). Glu-134 acts as the Charge relay system in catalysis.

This sequence belongs to the PTPS family. In terms of assembly, homohexamer formed of two homotrimers in a head to head fashion. Zn(2+) serves as cofactor. In terms of processing, phosphorylation of Ser-19 is required for maximal enzyme activity.

It carries out the reaction 7,8-dihydroneopterin 3'-triphosphate = 6-pyruvoyl-5,6,7,8-tetrahydropterin + triphosphate + H(+). Its pathway is cofactor biosynthesis; tetrahydrobiopterin biosynthesis; tetrahydrobiopterin from 7,8-dihydroneopterin triphosphate: step 1/3. Its function is as follows. Involved in the biosynthesis of tetrahydrobiopterin, an essential cofactor of aromatic amino acid hydroxylases. Catalyzes the transformation of 7,8-dihydroneopterin triphosphate into 6-pyruvoyl tetrahydropterin. In Pongo abelii (Sumatran orangutan), this protein is 6-pyruvoyl tetrahydrobiopterin synthase (PTS).